A 369-amino-acid chain; its full sequence is Chorismate synthase (369 aa).

2 residues coordinate NADP(+): arginine 48 and arginine 54. Residues 125–127 (RSS), 238–239 (NA), glycine 278, 293–297 (KPTSS), and arginine 319 contribute to the FMN site.

This sequence belongs to the chorismate synthase family. In terms of assembly, homotetramer. The cofactor is FMNH2.

It carries out the reaction 5-O-(1-carboxyvinyl)-3-phosphoshikimate = chorismate + phosphate. The protein operates within metabolic intermediate biosynthesis; chorismate biosynthesis; chorismate from D-erythrose 4-phosphate and phosphoenolpyruvate: step 7/7. Catalyzes the anti-1,4-elimination of the C-3 phosphate and the C-6 proR hydrogen from 5-enolpyruvylshikimate-3-phosphate (EPSP) to yield chorismate, which is the branch point compound that serves as the starting substrate for the three terminal pathways of aromatic amino acid biosynthesis. This reaction introduces a second double bond into the aromatic ring system. This Cupriavidus necator (strain ATCC 17699 / DSM 428 / KCTC 22496 / NCIMB 10442 / H16 / Stanier 337) (Ralstonia eutropha) protein is Chorismate synthase.